A 173-amino-acid polypeptide reads, in one-letter code: Inorganic pyrophosphatase (173 aa).

3 residues coordinate substrate: K26, R40, and Y52. Mg(2+)-binding residues include D62, D67, and D99. Y138 serves as a coordination point for substrate.

The protein belongs to the PPase family. In terms of assembly, homohexamer. Requires Mg(2+) as cofactor.

The protein localises to the cytoplasm. The catalysed reaction is diphosphate + H2O = 2 phosphate + H(+). Functionally, catalyzes the hydrolysis of inorganic pyrophosphate (PPi) forming two phosphate ions. In Sulfolobus acidocaldarius (strain ATCC 33909 / DSM 639 / JCM 8929 / NBRC 15157 / NCIMB 11770), this protein is Inorganic pyrophosphatase.